Reading from the N-terminus, the 422-residue chain is UDP-N-acetylglucosamine 1-carboxyvinyltransferase (422 aa).

Lysine 22 to asparagine 23 lines the phosphoenolpyruvate pocket. Arginine 94 is a binding site for UDP-N-acetyl-alpha-D-glucosamine. Cysteine 118 acts as the Proton donor in catalysis. A 2-(S-cysteinyl)pyruvic acid O-phosphothioketal modification is found at cysteine 118. UDP-N-acetyl-alpha-D-glucosamine is bound by residues arginine 123–leucine 127, aspartate 309, and isoleucine 331.

This sequence belongs to the EPSP synthase family. MurA subfamily.

It is found in the cytoplasm. The catalysed reaction is phosphoenolpyruvate + UDP-N-acetyl-alpha-D-glucosamine = UDP-N-acetyl-3-O-(1-carboxyvinyl)-alpha-D-glucosamine + phosphate. It participates in cell wall biogenesis; peptidoglycan biosynthesis. In terms of biological role, cell wall formation. Adds enolpyruvyl to UDP-N-acetylglucosamine. This Cereibacter sphaeroides (strain KD131 / KCTC 12085) (Rhodobacter sphaeroides) protein is UDP-N-acetylglucosamine 1-carboxyvinyltransferase.